Reading from the N-terminus, the 178-residue chain is uncharacterized protein (178 aa).

This is an uncharacterized protein from Sinorhizobium fredii (strain NBRC 101917 / NGR234).